Reading from the N-terminus, the 253-residue chain is 3-deoxy-manno-octulosonate cytidylyltransferase (253 aa).

Belongs to the KdsB family.

Its subcellular location is the cytoplasm. It catalyses the reaction 3-deoxy-alpha-D-manno-oct-2-ulosonate + CTP = CMP-3-deoxy-beta-D-manno-octulosonate + diphosphate. It participates in nucleotide-sugar biosynthesis; CMP-3-deoxy-D-manno-octulosonate biosynthesis; CMP-3-deoxy-D-manno-octulosonate from 3-deoxy-D-manno-octulosonate and CTP: step 1/1. The protein operates within bacterial outer membrane biogenesis; lipopolysaccharide biosynthesis. Activates KDO (a required 8-carbon sugar) for incorporation into bacterial lipopolysaccharide in Gram-negative bacteria. The sequence is that of 3-deoxy-manno-octulosonate cytidylyltransferase from Aeromonas hydrophila subsp. hydrophila (strain ATCC 7966 / DSM 30187 / BCRC 13018 / CCUG 14551 / JCM 1027 / KCTC 2358 / NCIMB 9240 / NCTC 8049).